Reading from the N-terminus, the 63-residue chain is Large ribosomal subunit protein uL29 (63 aa).

Belongs to the universal ribosomal protein uL29 family.

The sequence is that of Large ribosomal subunit protein uL29 from Vibrio vulnificus (strain CMCP6).